Here is a 316-residue protein sequence, read N- to C-terminus: BTB/POZ domain-containing adapter for CUL3-mediated RhoA degradation protein 2 (316 aa).

Positions 28 to 96 constitute a BTB domain; it reads KYVQLNVGGS…LRDDTITLPQ (69 aa). A compositionally biased stretch (polar residues) spans 268–279; that stretch reads EATSRSRSQASP. Residues 268-288 are disordered; it reads EATSRSRSQASPSEDEDTFEL. Position 278 is a phosphoserine (serine 278). The residue at position 280 (serine 280) is a Phosphoserine; by CK2.

It belongs to the BACURD family. Component of the BCR(TNFAIP1) E3 ubiquitin ligase complex, at least composed of CUL3, TNFAIP1/BACURD2 and RBX1. Interacts with RHOA; with a preference for RhoA-GDP. Interacts with RHOB. Interacts with PCNA. Interacts with CSNK2B. Post-translationally, phosphorylation at Ser-280 by CK2 facilitates the nucleus localization and increases interaction with PCNA.

The protein localises to the cytoplasm. The protein resides in the nucleus. Its subcellular location is the endosome. It participates in protein modification; protein ubiquitination. Its function is as follows. Substrate-specific adapter of a BCR (BTB-CUL3-RBX1) E3 ubiquitin-protein ligase complex involved in regulation of cytoskeleton structure. The BCR(TNFAIP1) E3 ubiquitin ligase complex mediates the ubiquitination of RHOA, leading to its degradation by the proteasome, thereby regulating the actin cytoskeleton and cell migration. Its interaction with RHOB may regulate apoptosis. May enhance the PCNA-dependent DNA polymerase delta activity. In Mus musculus (Mouse), this protein is BTB/POZ domain-containing adapter for CUL3-mediated RhoA degradation protein 2 (Tnfaip1).